Reading from the N-terminus, the 370-residue chain is Spermidine/putrescine import ATP-binding protein PotA (370 aa).

An ABC transporter domain is found at 11–241 (IELRSITKSY…PKNLFVAKFI (231 aa)). 43–50 (GPSGCGKT) serves as a coordination point for ATP.

Belongs to the ABC transporter superfamily. Spermidine/putrescine importer (TC 3.A.1.11.1) family. In terms of assembly, the complex is composed of two ATP-binding proteins (PotA), two transmembrane proteins (PotB and PotC) and a solute-binding protein (PotD).

The protein resides in the cell inner membrane. It catalyses the reaction ATP + H2O + polyamine-[polyamine-binding protein]Side 1 = ADP + phosphate + polyamineSide 2 + [polyamine-binding protein]Side 1.. In terms of biological role, part of the ABC transporter complex PotABCD involved in spermidine/putrescine import. Responsible for energy coupling to the transport system. This is Spermidine/putrescine import ATP-binding protein PotA from Pasteurella multocida (strain Pm70).